Consider the following 1114-residue polypeptide: Isoleucine--tRNA ligase (1114 aa).

Positions 61-71 match the 'HIGH' region motif; that stretch reads PTANGQPGTHH. The short motif at 640 to 644 is the 'KMSKS' region element; sequence KMSKH. ATP is bound at residue Lys643.

Belongs to the class-I aminoacyl-tRNA synthetase family. IleS type 2 subfamily. In terms of assembly, monomer. Zn(2+) is required as a cofactor.

It localises to the cytoplasm. It carries out the reaction tRNA(Ile) + L-isoleucine + ATP = L-isoleucyl-tRNA(Ile) + AMP + diphosphate. Its function is as follows. Catalyzes the attachment of isoleucine to tRNA(Ile). As IleRS can inadvertently accommodate and process structurally similar amino acids such as valine, to avoid such errors it has two additional distinct tRNA(Ile)-dependent editing activities. One activity is designated as 'pretransfer' editing and involves the hydrolysis of activated Val-AMP. The other activity is designated 'posttransfer' editing and involves deacylation of mischarged Val-tRNA(Ile). This is Isoleucine--tRNA ligase from Cutibacterium acnes (strain DSM 16379 / KPA171202) (Propionibacterium acnes).